The chain runs to 693 residues: MA3 DOMAIN-CONTAINING TRANSLATION REGULATORY FACTOR 2 (693 aa).

Positions 25–60 (SLDPLPQANMAEDLTKSRRHSPIKVEGSEETWGVED) are disordered. An MI 1 domain is found at 90 to 211 (EYKKKATVIV…PPAFLKKQMK (122 aa)). The short motif at 241–248 (EKRWGGTD) is the Nuclear localization signal 1 element. MI domains are found at residues 254 to 375 (DVKA…SLSA), 389 to 510 (VFKD…EVLN), and 560 to 681 (EVKE…EDSQ). Residues 430 to 437 (VKYLITLA) carry the Nuclear localization signal 2 motif. Residues 673–693 (ESFASEDSQSKKQNGSSSSSG) are disordered. Low complexity predominate over residues 683 to 693 (KKQNGSSSSSG).

The protein belongs to the PDCD4 family. Binds to EIF4A1. The association with ribosomes is modulated by cellular energy status and TOR activity. In terms of tissue distribution, mostly expressed in reproductive tissues, such as flower buds and flowers, and, to a lower extent, in vegetative tissues, such as leaves, roots and stems.

It localises to the nucleus. The protein resides in the cytoplasm. The protein localises to the cytosol. Functionally, involved in target of rapamycin (TOR)-regulated translation control, especially under energy-deficient conditions. This is MA3 DOMAIN-CONTAINING TRANSLATION REGULATORY FACTOR 2 from Arabidopsis thaliana (Mouse-ear cress).